A 221-amino-acid polypeptide reads, in one-letter code: ATP-dependent Clp protease proteolytic subunit 3 (221 aa).

Serine 118 functions as the Nucleophile in the catalytic mechanism. Histidine 143 is an active-site residue.

Belongs to the peptidase S14 family. Fourteen ClpP subunits assemble into 2 heptameric rings which stack back to back to give a disk-like structure with a central cavity, resembling the structure of eukaryotic proteasomes.

The protein localises to the cytoplasm. It catalyses the reaction Hydrolysis of proteins to small peptides in the presence of ATP and magnesium. alpha-casein is the usual test substrate. In the absence of ATP, only oligopeptides shorter than five residues are hydrolyzed (such as succinyl-Leu-Tyr-|-NHMec, and Leu-Tyr-Leu-|-Tyr-Trp, in which cleavage of the -Tyr-|-Leu- and -Tyr-|-Trp bonds also occurs).. Cleaves peptides in various proteins in a process that requires ATP hydrolysis. Has a chymotrypsin-like activity. Plays a major role in the degradation of misfolded proteins. The chain is ATP-dependent Clp protease proteolytic subunit 3 from Nocardia farcinica (strain IFM 10152).